An 884-amino-acid polypeptide reads, in one-letter code: Peroxidase-like protein 2 (884 aa).

Disordered stretches follow at residues 1–53 (TTSC…RTKG), 78–188 (VHSK…SQGA), 204–279 (EKET…DDDD), 653–695 (PEIP…SATQ), 710–744 (DLQPKAQDPTKLPGVPEYLQPKPKSSGLSTQGAVG), and 828–884 (VGGM…SDTK). The span at 17–29 (GTCNNVNKPTVGS) shows a compositional bias: polar residues. Residues 32–53 (DKFKRDVKPQYDDKKGDPRTKG) show a composition bias toward basic and acidic residues. Low complexity predominate over residues 91 to 118 (KSSAVSPKMPSMGNLQSLGNLLSLGSVP). Pro residues predominate over residues 119 to 129 (VPAPAPAPEPV). 2 stretches are compositionally biased toward basic residues: residues 160–172 (PKSKPKPKPKPKP) and 230–245 (RTPKKSPRKKARQSIF). Basic and acidic residues predominate over residues 246–267 (RRRDDRKDDRKGLRGTKGRRDD). Positions 268-279 (SDDNDDSDDDDD) are enriched in acidic residues. The segment covering 828 to 856 (VGGMGGSVGVGGSVGSGGSGGSRGAGGSG) has biased composition (gly residues). The span at 865–884 (DDSKCSDDEKQKYCKNSDTK) shows a compositional bias: basic and acidic residues.

Belongs to the peroxidase family. In terms of tissue distribution, component of the acid-insoluble and acid-soluble organic matrix of calcified layers of the shell (at protein level).

It is found in the secreted. The chain is Peroxidase-like protein 2 from Lottia gigantea (Giant owl limpet).